Here is a 344-residue protein sequence, read N- to C-terminus: uncharacterized protein (344 aa).

The signal sequence occupies residues methionine 1–alanine 20.

The protein belongs to the fimbrial protein family.

Part of the yehABCD fimbrial operon. Could contribute to adhesion to various surfaces in specific environmental niches. This is an uncharacterized protein from Escherichia coli (strain K12).